The following is a 349-amino-acid chain: tRNA pseudouridine synthase D (349 aa).

Phe-27 serves as a coordination point for substrate. Residue Asp-80 is the Nucleophile of the active site. Asn-129 is a binding site for substrate. The TRUD domain maps to 155–303; the sequence is GVPNYFGAQR…VEAARRAMLL (149 aa). Phe-329 serves as a coordination point for substrate.

The protein belongs to the pseudouridine synthase TruD family.

It catalyses the reaction uridine(13) in tRNA = pseudouridine(13) in tRNA. Its function is as follows. Responsible for synthesis of pseudouridine from uracil-13 in transfer RNAs. The chain is tRNA pseudouridine synthase D from Shigella dysenteriae serotype 1 (strain Sd197).